The primary structure comprises 883 residues: DNA mismatch repair protein MutS (883 aa).

633 to 640 (GPNMGGKS) contacts ATP.

The protein belongs to the DNA mismatch repair MutS family.

In terms of biological role, this protein is involved in the repair of mismatches in DNA. It is possible that it carries out the mismatch recognition step. This protein has a weak ATPase activity. In Bordetella pertussis (strain Tohama I / ATCC BAA-589 / NCTC 13251), this protein is DNA mismatch repair protein MutS.